The following is a 241-amino-acid chain: N-acetylmuramoyl-L-alanine amidase Rv3717 (241 aa).

The N-terminal stretch at 1–24 (MIVGVLVAAATPIISSASATPANI) is a signal peptide. The region spanning 29-230 (VFIDPGHNGA…KYANALVRGV (202 aa)) is the MurNAc-LAA domain. Residue His-35 coordinates Zn(2+). The segment at 45 to 69 (RQVPTGRGGTKNCQASGTSTNSGYP) is disordered. Residues 55–67 (KNCQASGTSTNSG) are compositionally biased toward polar residues. A disulfide bridge connects residues Cys-57 and Cys-105. 2 residues coordinate Zn(2+): Glu-70 and His-125. The active-site Proton donor/acceptor is Glu-200.

The protein belongs to the N-acetylmuramoyl-L-alanine amidase 3 family. Monomer. The cofactor is Zn(2+).

The protein localises to the periplasm. It carries out the reaction Hydrolyzes the link between N-acetylmuramoyl residues and L-amino acid residues in certain cell-wall glycopeptides.. It participates in cell wall degradation; peptidoglycan degradation. Its activity is regulated as follows. The structure reveals a short flexible hairpin turn that partially occludes the active site and may be involved in autoregulation. Cell-wall hydrolase that hydrolyzes the amide bond between N-acetylmuramic acid and L-alanine in cell-wall glycopeptides. Is able to hydrolyze the cell walls of several bacterial species (i.e. Paenibacillus sp., B.avium, E.coli DH5alpha, E.aerogenes, L.acidophilus, B.thuringiensis, B.pumilus, B.subtilis and E.coli W3110), thereby showing that it is a cell-wall hydrolase with broad-spectrum activity. May have a role in peptidoglycan fragment recycling. The protein is N-acetylmuramoyl-L-alanine amidase Rv3717 of Mycobacterium tuberculosis (strain ATCC 25618 / H37Rv).